Reading from the N-terminus, the 332-residue chain is RING-H2 finger protein ATL81 (332 aa).

The N-terminal stretch at 1 to 19 (MYDLTFLLISLFPIDITLP) is a signal peptide. Residues 76–96 (IVLTGSLLFIIFTGFFSFFFC) traverse the membrane as a helical segment. The RING-type; atypical zinc finger occupies 154 to 196 (CSICLTEFMDDDTIRLISTCNHSFHTICIDLWFEGHKTCPVCR).

Belongs to the RING-type zinc finger family. ATL subfamily.

The protein resides in the membrane. The enzyme catalyses S-ubiquitinyl-[E2 ubiquitin-conjugating enzyme]-L-cysteine + [acceptor protein]-L-lysine = [E2 ubiquitin-conjugating enzyme]-L-cysteine + N(6)-ubiquitinyl-[acceptor protein]-L-lysine.. Its pathway is protein modification; protein ubiquitination. In Arabidopsis thaliana (Mouse-ear cress), this protein is RING-H2 finger protein ATL81 (ATL81).